The following is a 271-amino-acid chain: Aminoglycoside N(3)-acetyltransferase III (271 aa).

CoA is bound by residues His31, Ala32, Ser33, Val34, and Lys35. A 2-deoxystreptamine antibiotic-binding residues include Tyr64, Asp72, and Glu102. CoA-binding residues include Ser104, Val105, and Phe109. A 2-deoxystreptamine antibiotic contacts are provided by Glu123, Tyr146, and Asp170. 2 residues coordinate CoA: Thr171 and Thr173. 4 residues coordinate a 2-deoxystreptamine antibiotic: His176, Thr212, Gly213, and Phe221.

It belongs to the antibiotic N-acetyltransferase family. As to quaternary structure, homodimer.

The catalysed reaction is a 2-deoxystreptamine antibiotic + acetyl-CoA = an N(3)-acetyl-2-deoxystreptamine antibiotic + CoA + H(+). In terms of biological role, resistance to antibiotics containing the 2-deoxy-streptamine ring including dibekacin, gentamicin, kanamycin, sisomicin, tobramycin and neomycin, but not to amikacin or netilmicin. Acetylates a broad range of both 4,5- and 4,6-disubstituted aminoglycosides, including neomycin, paromomycin, ribostamycin, sisomicin, gentamicin, tobramycin and kanamycin, with no preference of one disubstitution over the other. Acetylates sisomicin and kanamycin most and least efficiently, respectively. Does not modify plazomicin. The protein is Aminoglycoside N(3)-acetyltransferase III of Pseudomonas aeruginosa.